We begin with the raw amino-acid sequence, 215 residues long: Thiamine-phosphate synthase (215 aa).

4-amino-2-methyl-5-(diphosphooxymethyl)pyrimidine is bound by residues 40 to 44 and asparagine 72; that span reads QLRIK. Residues aspartate 73 and aspartate 92 each coordinate Mg(2+). Serine 111 lines the 4-amino-2-methyl-5-(diphosphooxymethyl)pyrimidine pocket. 137-139 provides a ligand contact to 2-[(2R,5Z)-2-carboxy-4-methylthiazol-5(2H)-ylidene]ethyl phosphate; it reads TTT. Position 140 (lysine 140) interacts with 4-amino-2-methyl-5-(diphosphooxymethyl)pyrimidine. Residues glycine 169 and 189-190 each bind 2-[(2R,5Z)-2-carboxy-4-methylthiazol-5(2H)-ylidene]ethyl phosphate; that span reads VS.

This sequence belongs to the thiamine-phosphate synthase family. Requires Mg(2+) as cofactor.

The catalysed reaction is 2-[(2R,5Z)-2-carboxy-4-methylthiazol-5(2H)-ylidene]ethyl phosphate + 4-amino-2-methyl-5-(diphosphooxymethyl)pyrimidine + 2 H(+) = thiamine phosphate + CO2 + diphosphate. It catalyses the reaction 2-(2-carboxy-4-methylthiazol-5-yl)ethyl phosphate + 4-amino-2-methyl-5-(diphosphooxymethyl)pyrimidine + 2 H(+) = thiamine phosphate + CO2 + diphosphate. It carries out the reaction 4-methyl-5-(2-phosphooxyethyl)-thiazole + 4-amino-2-methyl-5-(diphosphooxymethyl)pyrimidine + H(+) = thiamine phosphate + diphosphate. It functions in the pathway cofactor biosynthesis; thiamine diphosphate biosynthesis; thiamine phosphate from 4-amino-2-methyl-5-diphosphomethylpyrimidine and 4-methyl-5-(2-phosphoethyl)-thiazole: step 1/1. In terms of biological role, condenses 4-methyl-5-(beta-hydroxyethyl)thiazole monophosphate (THZ-P) and 2-methyl-4-amino-5-hydroxymethyl pyrimidine pyrophosphate (HMP-PP) to form thiamine monophosphate (TMP). In Proteus mirabilis (strain HI4320), this protein is Thiamine-phosphate synthase.